The sequence spans 143 residues: Transcriptional regulator MraZ (143 aa).

SpoVT-AbrB domains are found at residues 5-47 (TFTP…PRNV) and 76-119 (ADEQ…NAES).

Belongs to the MraZ family. In terms of assembly, forms oligomers.

It localises to the cytoplasm. It is found in the nucleoid. The sequence is that of Transcriptional regulator MraZ from Corynebacterium kroppenstedtii (strain DSM 44385 / JCM 11950 / CIP 105744 / CCUG 35717).